We begin with the raw amino-acid sequence, 173 residues long: MPSNQNRDNFIDKAFTVIAESIVKIMPIAEKEKKAYIYYRDGLAAQNNGDYSEALEYYKESLLLEENKIDRGETLKNMAIIYMSNGEEDLSIETYEKALVENPKQPSCLKNIGLIYEKRGRYAEQNGDLDQRDIWYDKAAEVWSKAVRLYPGGYLDIENWLKNSGRSSIDMYL.

TPR repeat units follow at residues 35–68 (AYIY…EENK), 72–105 (GETL…NPKQ), and 120–153 (GRYA…YPGG).

The protein belongs to the Ycf3 family.

The protein resides in the cellular thylakoid membrane. In terms of biological role, essential for the assembly of the photosystem I (PSI) complex. May act as a chaperone-like factor to guide the assembly of the PSI subunits. The polypeptide is Photosystem I assembly protein Ycf3 (Prochlorococcus marinus (strain MIT 9215)).